A 277-amino-acid chain; its full sequence is Bis(5'-nucleosyl)-tetraphosphatase, symmetrical (277 aa).

This sequence belongs to the Ap4A hydrolase family.

The enzyme catalyses P(1),P(4)-bis(5'-adenosyl) tetraphosphate + H2O = 2 ADP + 2 H(+). In terms of biological role, hydrolyzes diadenosine 5',5'''-P1,P4-tetraphosphate to yield ADP. The chain is Bis(5'-nucleosyl)-tetraphosphatase, symmetrical from Bordetella pertussis (strain Tohama I / ATCC BAA-589 / NCTC 13251).